The following is a 309-amino-acid chain: MLIHVLGSGAGGGFPQWNCNCHNCNRLRKGNFKGQARTQSSIAASTNGTDWVLFNASPDILGQLQHFPAIQPGRALRDTGIRGIVLLDSQIDHTTGLLMLREHHRPLDVYCTESVHQDLTTGNPLFKVLEHYCTVNWHPLQLPQGDAPGEGFQVEGIEGLRLTPVPLRSEAPPYSPHRHNYHVGDTIGLWLEDPATQKSLFYAPGLGQIEDHVLSLMEKADCLLIDGTFWTEDEMERAGITQKRATEMGHLPQSGQGGMISVLAPLTSPWKILIHINNTNPILDEESLERAQLEAAGIEVAFDGMDIIL.

The protein belongs to the PqqB family.

It participates in cofactor biosynthesis; pyrroloquinoline quinone biosynthesis. In terms of biological role, may be involved in the transport of PQQ or its precursor to the periplasm. The protein is Coenzyme PQQ synthesis protein B of Nitrosococcus oceani (strain ATCC 19707 / BCRC 17464 / JCM 30415 / NCIMB 11848 / C-107).